We begin with the raw amino-acid sequence, 285 residues long: Putative cytochrome c peroxidase, mitochondrial (285 aa).

H37 functions as the Proton acceptor in the catalytic mechanism. H161 contacts heme b. W177 (tryptophan radical intermediate) is an active-site residue.

Belongs to the peroxidase family. Cytochrome c peroxidase subfamily. Forms a one-to-one complex with cytochrome c. The cofactor is heme b.

It is found in the mitochondrion matrix. The protein localises to the mitochondrion intermembrane space. The enzyme catalyses 2 Fe(II)-[cytochrome c] + H2O2 + 2 H(+) = 2 Fe(III)-[cytochrome c] + 2 H2O. Its function is as follows. Destroys radicals which are normally produced within the cells and which are toxic to biological systems. This chain is Putative cytochrome c peroxidase, mitochondrial, found in Yarrowia lipolytica (strain CLIB 122 / E 150) (Yeast).